The primary structure comprises 649 residues: UvrABC system protein B (649 aa).

In terms of domain architecture, Helicase ATP-binding spans 25-178 (EHYKDGIKEQ…EDILKELVKM (154 aa)). Residue 38–45 (GVTGSGKT) participates in ATP binding. The Beta-hairpin signature appears at 91-114 (YYDYYQPEAYVAQTDTFIDKESAI). The Helicase C-terminal domain maps to 428–594 (QVDDLLGEIR…SVVRKLKDKK (167 aa)). Positions 614–649 (DEIIKELEKEMKQAAKDLNFEKAAKLRDRIMELKEE) constitute a UVR domain.

It belongs to the UvrB family. Forms a heterotetramer with UvrA during the search for lesions. Interacts with UvrC in an incision complex.

Its subcellular location is the cytoplasm. Its function is as follows. The UvrABC repair system catalyzes the recognition and processing of DNA lesions. A damage recognition complex composed of 2 UvrA and 2 UvrB subunits scans DNA for abnormalities. Upon binding of the UvrA(2)B(2) complex to a putative damaged site, the DNA wraps around one UvrB monomer. DNA wrap is dependent on ATP binding by UvrB and probably causes local melting of the DNA helix, facilitating insertion of UvrB beta-hairpin between the DNA strands. Then UvrB probes one DNA strand for the presence of a lesion. If a lesion is found the UvrA subunits dissociate and the UvrB-DNA preincision complex is formed. This complex is subsequently bound by UvrC and the second UvrB is released. If no lesion is found, the DNA wraps around the other UvrB subunit that will check the other stand for damage. This Methanosphaera stadtmanae (strain ATCC 43021 / DSM 3091 / JCM 11832 / MCB-3) protein is UvrABC system protein B.